A 145-amino-acid chain; its full sequence is Transcription antitermination protein NusB (145 aa).

This sequence belongs to the NusB family.

In terms of biological role, involved in transcription antitermination. Required for transcription of ribosomal RNA (rRNA) genes. Binds specifically to the boxA antiterminator sequence of the ribosomal RNA (rrn) operons. The polypeptide is Transcription antitermination protein NusB (Burkholderia mallei (strain NCTC 10247)).